The following is a 352-amino-acid chain: Small ribosomal subunit biogenesis GTPase RsgA (352 aa).

Positions 1–21 (MKKNKLSKNQHRRIQAHHQYR) are enriched in basic residues. Residues 1 to 38 (MKKNKLSKNQHRRIQAHHQYRLHPTSLTDDKNNQLDDA) form a disordered region. The region spanning 116 to 278 (FYDGIKPMAA…LIDSPGIREF (163 aa)) is the CP-type G domain. GTP-binding positions include 164 to 167 (NKID) and 218 to 226 (GQSGVGKSS). 4 residues coordinate Zn(2+): Cys-302, Cys-307, His-309, and Cys-315.

Belongs to the TRAFAC class YlqF/YawG GTPase family. RsgA subfamily. In terms of assembly, monomer. Associates with 30S ribosomal subunit, binds 16S rRNA. Zn(2+) serves as cofactor.

It localises to the cytoplasm. Functionally, one of several proteins that assist in the late maturation steps of the functional core of the 30S ribosomal subunit. Helps release RbfA from mature subunits. May play a role in the assembly of ribosomal proteins into the subunit. Circularly permuted GTPase that catalyzes slow GTP hydrolysis, GTPase activity is stimulated by the 30S ribosomal subunit. This Hamiltonella defensa subsp. Acyrthosiphon pisum (strain 5AT) protein is Small ribosomal subunit biogenesis GTPase RsgA.